A 439-amino-acid polypeptide reads, in one-letter code: MSHGEEKEPGIPQKVDSIDEIFVGCKSWVLKDGQDRLAEILSINSRRDPPKFYVHYEDFNKRLDEWITADRLQIDKEVIFPRPKELEEKKDSKKKKQQQNKSATPQAASATPDGGDVMDLDNLNVQGIPNEDISREDEIKKLRTSGSMTQNQNEVARVRNLNKVIMGKYEIEPWYFSPYPIELTDEDVVYIDDFSLQYFGSKKQYERYRKKCTLRHPPGNEIYRDDYVSFFEIDGRKQRTWCRNLCLLSKLFLDHKTLYYDVDPFLFYCMTRRDELGHHIVGYFSKEKESADAYNVACILTLPQYQRMGYGRLLIEFSYELSKKEGKVGSPEKPLSDLGLLSYRAYWADTLIKLLVEHGQEITIDEVSSISSMTTTDILHTAKALEILRFYRGQHVLYLNSDVMKRYKKLKNNKRRSIDPQKLIWTPPVFTASQLRFAW.

In terms of domain architecture, Tudor-knot spans 23-73; sequence VGCKSWVLKDGQDRLAEILSINSRRDPPKFYVHYEDFNKRLDEWITADRLQ. The interval 83–120 is disordered; that stretch reads PKELEEKKDSKKKKQQQNKSATPQAASATPDGGDVMDL. One can recognise an MYST-type HAT domain in the interval 156-427; the sequence is ARVRNLNKVI…IDPQKLIWTP (272 aa). A C2HC MYST-type; degenerate zinc finger spans residues 189–214; the sequence is VYIDDFSLQYFGSKKQYERYRKKCTL. The short motif at 239-260 is the ESA1-RPD3 motif element; the sequence is RTWCRNLCLLSKLFLDHKTLYY. At Lys256 the chain carries N6-acetyllysine; by autocatalysis. Residues 297–301 and 306–312 each bind acetyl-CoA; these read ACILT and QRMGYGR. The Proton donor/acceptor role is filled by Glu332. Ser336 contacts acetyl-CoA.

This sequence belongs to the MYST (SAS/MOZ) family. In terms of assembly, component of the NuA4 histone acetyltransferase complex. Autoacetylation at Lys-256 is required for proper function.

Its subcellular location is the nucleus. The protein resides in the chromosome. It catalyses the reaction L-lysyl-[histone] + acetyl-CoA = N(6)-acetyl-L-lysyl-[histone] + CoA + H(+). The catalysed reaction is L-lysyl-[protein] + acetyl-CoA = N(6)-acetyl-L-lysyl-[protein] + CoA + H(+). The enzyme catalyses 2-hydroxyisobutanoyl-CoA + L-lysyl-[protein] = N(6)-(2-hydroxyisobutanoyl)-L-lysyl-[protein] + CoA + H(+). It carries out the reaction (2E)-butenoyl-CoA + L-lysyl-[protein] = N(6)-(2E)-butenoyl-L-lysyl-[protein] + CoA + H(+). In terms of biological role, catalytic component of the NuA4 histone acetyltransferase (HAT) complex which is involved in epigenetic transcriptional activation of selected genes principally by acetylation of nucleosomal histones H4, H3, H2B, H2A and H2A variant H2A.Z. Acetylates histone H4 to form H4K5ac, H4K8ac, H4K12ac and H4K16ac, histone H3 to form H3K14ac, and histone H2A to form H2AK4ac and H2AK7ac. The NuA4 complex is involved in the DNA damage response and is required for chromosome segregation. The NuA4 complex plays a direct role in repair of DNA double-strand breaks (DSBs) through homologous recombination. Recruitment to promoters depends on H3K4me. Also acetylates non-histone proteins. In addition to protein acetyltransferase, can use different acyl-CoA substrates, such as 2-hydroxyisobutanoyl-CoA (2-hydroxyisobutyryl-CoA) or (2E)-butenoyl-CoA (crotonyl-CoA), and is able to mediate protein 2-hydroxyisobutyrylation and crotonylation, respectively. This Kluyveromyces lactis (strain ATCC 8585 / CBS 2359 / DSM 70799 / NBRC 1267 / NRRL Y-1140 / WM37) (Yeast) protein is Histone acetyltransferase ESA1 (ESA1).